The primary structure comprises 180 residues: Hypoxanthine-guanine phosphoribosyltransferase (180 aa).

Residues K43 and G44 each contribute to the diphosphate site. Mg(2+) is bound by residues E99 and D100. D103 functions as the Proton acceptor in the catalytic mechanism. GMP is bound by residues K131, 152 to 153 (FV), and D159. R165 serves as a coordination point for diphosphate.

The protein belongs to the purine/pyrimidine phosphoribosyltransferase family. Mg(2+) is required as a cofactor.

It localises to the cytoplasm. The catalysed reaction is IMP + diphosphate = hypoxanthine + 5-phospho-alpha-D-ribose 1-diphosphate. The enzyme catalyses GMP + diphosphate = guanine + 5-phospho-alpha-D-ribose 1-diphosphate. Its pathway is purine metabolism; IMP biosynthesis via salvage pathway; IMP from hypoxanthine: step 1/1. It participates in purine metabolism; GMP biosynthesis via salvage pathway; GMP from guanine: step 1/1. Its function is as follows. Purine salvage pathway enzyme that catalyzes the transfer of the ribosyl-5-phosphate group from 5-phospho-alpha-D-ribose 1-diphosphate (PRPP) to the N9 position of the 6-oxopurines hypoxanthine and guanine to form the corresponding ribonucleotides IMP (inosine 5'-monophosphate) and GMP (guanosine 5'-monophosphate), with the release of PPi. In Streptococcus pneumoniae serotype 4 (strain ATCC BAA-334 / TIGR4), this protein is Hypoxanthine-guanine phosphoribosyltransferase (hpt).